Reading from the N-terminus, the 242-residue chain is NAD(P)H-quinone oxidoreductase subunit K (242 aa).

[4Fe-4S] cluster is bound by residues Cys59, Cys60, Cys124, and Cys155.

This sequence belongs to the complex I 20 kDa subunit family. NDH-1 can be composed of about 15 different subunits; different subcomplexes with different compositions have been identified which probably have different functions. [4Fe-4S] cluster serves as cofactor.

The protein localises to the cellular thylakoid membrane. It catalyses the reaction a plastoquinone + NADH + (n+1) H(+)(in) = a plastoquinol + NAD(+) + n H(+)(out). It carries out the reaction a plastoquinone + NADPH + (n+1) H(+)(in) = a plastoquinol + NADP(+) + n H(+)(out). In terms of biological role, NDH-1 shuttles electrons from an unknown electron donor, via FMN and iron-sulfur (Fe-S) centers, to quinones in the respiratory and/or the photosynthetic chain. The immediate electron acceptor for the enzyme in this species is believed to be plastoquinone. Couples the redox reaction to proton translocation, and thus conserves the redox energy in a proton gradient. Cyanobacterial NDH-1 also plays a role in inorganic carbon-concentration. The protein is NAD(P)H-quinone oxidoreductase subunit K of Synechococcus sp. (strain RCC307).